Reading from the N-terminus, the 151-residue chain is UPF0178 protein Hhal_1913 (151 aa).

Belongs to the UPF0178 family.

The chain is UPF0178 protein Hhal_1913 from Halorhodospira halophila (strain DSM 244 / SL1) (Ectothiorhodospira halophila (strain DSM 244 / SL1)).